The following is a 170-amino-acid chain: Arginine repressor (170 aa).

The protein belongs to the ArgR family.

It is found in the cytoplasm. It functions in the pathway amino-acid biosynthesis; L-arginine biosynthesis [regulation]. Its function is as follows. Regulates arginine biosynthesis genes. This Bifidobacterium longum (strain NCC 2705) protein is Arginine repressor.